The primary structure comprises 527 residues: MAGPAWRDAADVVVIGTGVAGLAAALAADRAGRSVVVLSKAAQTHVTATHYAQGGIAVVLPDNDDSVDAHVADTLAAGAGLCDPDAVYSIVADGYRAVTDLVGAGARLDESVPGRWALTREGGHSRRRIVHAGGDATGAEVQRALQDAAGMLDIRTGHVALRVLHDGTAVTGLLVVRPDGCGIISAPSVILATGGLGHLYSATTNPAGSTGDGIALGLWAGVAVSDLEFIQFHPTMLFAGRAGGRRPLITEAIRGEGAILVDRQGNSITAGVHPMGDLAPRDVVAAAIDARLKATGDPCVYLDARGIEGFASRFPTVTASCRAAGIDPVRQPIPVVPGAHYSCGGIVTDVYGQTELLGLYAAGEVARTGLHGANRLASNSLLEGLVVGGRAGKAAAAHAAAAGRSRATSSATWPEPISYTALDRGDLQRAMSRDASMYRAAAGLHRLCDSLSGAQVRDVACRRDFEDVALTLVAQSVTAAALARTESRGCHHRAEYPCTVPEQARSIVVRGADDANAVCVQALVAVC.

FAD-binding positions include 17–20 (TGVA), Lys40, 48–55 (ATHYAQGG), and Asp212. Arg281 serves as the catalytic Proton donor/acceptor. FAD contacts are provided by residues Glu364 and 380-381 (SL).

This sequence belongs to the FAD-dependent oxidoreductase 2 family. NadB subfamily. Requires FAD as cofactor.

The protein localises to the cytoplasm. It carries out the reaction L-aspartate + O2 = iminosuccinate + H2O2. It functions in the pathway cofactor biosynthesis; NAD(+) biosynthesis; iminoaspartate from L-aspartate (oxidase route): step 1/1. Functionally, catalyzes the oxidation of L-aspartate to iminoaspartate, the first step in the de novo biosynthesis of NAD(+). This is L-aspartate oxidase (nadB) from Mycobacterium tuberculosis (strain CDC 1551 / Oshkosh).